Here is a 424-residue protein sequence, read N- to C-terminus: Serine--tRNA ligase (424 aa).

Position 231–233 (231–233 (TAE)) interacts with L-serine. 262-264 (RSE) provides a ligand contact to ATP. Residue Glu285 participates in L-serine binding. 349–352 (EISS) is a binding site for ATP. Ser385 is a binding site for L-serine.

It belongs to the class-II aminoacyl-tRNA synthetase family. Type-1 seryl-tRNA synthetase subfamily. As to quaternary structure, homodimer. The tRNA molecule binds across the dimer.

It localises to the cytoplasm. The enzyme catalyses tRNA(Ser) + L-serine + ATP = L-seryl-tRNA(Ser) + AMP + diphosphate + H(+). The catalysed reaction is tRNA(Sec) + L-serine + ATP = L-seryl-tRNA(Sec) + AMP + diphosphate + H(+). The protein operates within aminoacyl-tRNA biosynthesis; selenocysteinyl-tRNA(Sec) biosynthesis; L-seryl-tRNA(Sec) from L-serine and tRNA(Sec): step 1/1. Catalyzes the attachment of serine to tRNA(Ser). Is also able to aminoacylate tRNA(Sec) with serine, to form the misacylated tRNA L-seryl-tRNA(Sec), which will be further converted into selenocysteinyl-tRNA(Sec). The sequence is that of Serine--tRNA ligase from Bacillus cytotoxicus (strain DSM 22905 / CIP 110041 / 391-98 / NVH 391-98).